A 262-amino-acid polypeptide reads, in one-letter code: PsbP domain-containing protein 6, chloroplastic (262 aa).

Cysteines 128 and 132 form a disulfide.

The protein belongs to the PsbP family.

It localises to the plastid. The protein resides in the chloroplast thylakoid lumen. May be involved in the redox regulation of photosystem II. The sequence is that of PsbP domain-containing protein 6, chloroplastic (PPD6) from Arabidopsis thaliana (Mouse-ear cress).